Here is a 515-residue protein sequence, read N- to C-terminus: 1-pyrroline-5-carboxylate dehydrogenase 1 (515 aa).

Residues Glu-286 and Cys-320 contribute to the active site.

Belongs to the aldehyde dehydrogenase family. RocA subfamily.

It catalyses the reaction L-glutamate 5-semialdehyde + NAD(+) + H2O = L-glutamate + NADH + 2 H(+). The protein operates within amino-acid degradation; L-proline degradation into L-glutamate; L-glutamate from L-proline: step 2/2. This is 1-pyrroline-5-carboxylate dehydrogenase 1 (rocA1) from Halalkalibacterium halodurans (strain ATCC BAA-125 / DSM 18197 / FERM 7344 / JCM 9153 / C-125) (Bacillus halodurans).